Consider the following 131-residue polypeptide: Profilin-3 (131 aa).

The protein belongs to the profilin family. Occurs in many kinds of cells as a complex with monomeric actin in a 1:1 ratio.

It is found in the cytoplasm. The protein localises to the cytoskeleton. Functionally, binds to actin and affects the structure of the cytoskeleton. At high concentrations, profilin prevents the polymerization of actin, whereas it enhances it at low concentrations. By binding to PIP2, it inhibits the formation of IP3 and DG. The polypeptide is Profilin-3 (Hevea brasiliensis (Para rubber tree)).